Consider the following 286-residue polypeptide: Bifunctional protein FolD (286 aa).

NADP(+) contacts are provided by residues 164-166 (GRS), Ser-193, and Ile-234.

It belongs to the tetrahydrofolate dehydrogenase/cyclohydrolase family. Homodimer.

The catalysed reaction is (6R)-5,10-methylene-5,6,7,8-tetrahydrofolate + NADP(+) = (6R)-5,10-methenyltetrahydrofolate + NADPH. The enzyme catalyses (6R)-5,10-methenyltetrahydrofolate + H2O = (6R)-10-formyltetrahydrofolate + H(+). Its pathway is one-carbon metabolism; tetrahydrofolate interconversion. Catalyzes the oxidation of 5,10-methylenetetrahydrofolate to 5,10-methenyltetrahydrofolate and then the hydrolysis of 5,10-methenyltetrahydrofolate to 10-formyltetrahydrofolate. The protein is Bifunctional protein FolD of Oleidesulfovibrio alaskensis (strain ATCC BAA-1058 / DSM 17464 / G20) (Desulfovibrio alaskensis).